The following is a 168-amino-acid chain: G/U mismatch-specific DNA glycosylase (168 aa).

The protein belongs to the uracil-DNA glycosylase (UDG) superfamily. TDG/mug family. Binds DNA as a monomer.

It localises to the cytoplasm. The catalysed reaction is Specifically hydrolyzes mismatched double-stranded DNA and polynucleotides, releasing free uracil.. Excises ethenocytosine and uracil, which can arise by alkylation or deamination of cytosine, respectively, from the corresponding mispairs with guanine in ds-DNA. It is capable of hydrolyzing the carbon-nitrogen bond between the sugar-phosphate backbone of the DNA and the mispaired base. The complementary strand guanine functions in substrate recognition. Required for DNA damage lesion repair in stationary-phase cells. The polypeptide is G/U mismatch-specific DNA glycosylase (Salmonella paratyphi B (strain ATCC BAA-1250 / SPB7)).